Consider the following 275-residue polypeptide: NH(3)-dependent NAD(+) synthetase (275 aa).

50 to 57 (GISGGVDS) is an ATP binding site. Residue Asp-56 participates in Mg(2+) binding. Arg-147 serves as a coordination point for deamido-NAD(+). Thr-167 contacts ATP. Glu-172 contributes to the Mg(2+) binding site. Deamido-NAD(+) is bound by residues Lys-180 and Asp-187. Lys-196 and Thr-218 together coordinate ATP. 267–268 (HK) is a deamido-NAD(+) binding site.

This sequence belongs to the NAD synthetase family. Homodimer.

The enzyme catalyses deamido-NAD(+) + NH4(+) + ATP = AMP + diphosphate + NAD(+) + H(+). It participates in cofactor biosynthesis; NAD(+) biosynthesis; NAD(+) from deamido-NAD(+) (ammonia route): step 1/1. Its function is as follows. Catalyzes the ATP-dependent amidation of deamido-NAD to form NAD. Uses ammonia as a nitrogen source. The protein is NH(3)-dependent NAD(+) synthetase of Pseudomonas entomophila (strain L48).